The chain runs to 129 residues: Ribonuclease VapC12 (129 aa).

The Mg(2+) site is built by D5 and D94.

It belongs to the PINc/VapC protein family. Mg(2+) is required as a cofactor.

In terms of biological role, toxic component of a type II toxin-antitoxin (TA) system. An RNase. The cognate antitoxin is VapB12. In Mycobacterium tuberculosis (strain CDC 1551 / Oshkosh), this protein is Ribonuclease VapC12.